The chain runs to 1002 residues: MSEKPQKSQKSEVKDYSKTLFLPQTEFPMRAGLPQREPEILKYWNDIGLYDRLRQEAEGRTKFVLHDGPPYANGNIHIGHALNKILKDVVTKSQQMLGFDSNYVPGWDCHGLPIEWKIEEENYRKKGKQKPDFRDSAAMVAFRKECRAYATHWINVQREEFKRLGIIGDWDHPYQTMSYPAEAQIARELMKFAANGTLYRGSKPVMWSVVEKTALAEAEVEYEDYTSDMVWVKFPVTSPAHGALASASVVIWTTTPWTLPGNRAISFSPKIAYGLYKVTDAPADNWAKTGDLLILADALAAEVFKQARVTTYEKVRELPADTLDAVECAHPLKGFSGGYEFTVPLLPGDHVTDDTGTGFVHTAPGHGREDFDVWMANARELEARGINTTIPYTVDENGAFTDHAPGFVGKRVINDKGEKGDANEAVIKALIDAGKLLARGRLKHQYPHSWRSKKPVIFRNTPQWFIAMDKDISANGHAKKGDTLRARALHAISVTQWVPPSGENRINGMIANRPDWVISRQRAWGVPIAVFVREKSDGSAEILQDEIVNQRIAEAFMEEGADAWYMDGARERFLGSRASEDWKKVDDICDVWFDSGSTHAFVLEDRQNFPQLGNIVRKVDGGSDTVMYLEGSDQHRGWFHSSLLESAGTRGRAPYDIVLTHGFTLDENGRKMSKSLGNTVEPQKVIKDSGADILRLWVCATDYADDQRIGPEILKNTIETYRKLRNSIRWMLGTLHHFKPSEKVAYAEMPELERLMLHELAGHAETVRNAYAAFDYKTVVASLAAFMNSELSAFYFDIRKDTLYCDPPSSPARKAALTTIDLLCDAILKWLAPILSFTTDEAWRMFRPNAEPSVHLTLFPADIEKLRDDKLAAKWETIRNVRRAVTGALELERAAKNIGSSLEASPVIYVADRDMLATLFDTDLAEVCITSNYEVRESEAPASAFRLDAVPGVAVVVEKAVGTKCARSWKISQTVGEDPEYPDVTPRDAQALREWKALGVGV.

Positions 70–80 (PYANGNIHIGH) match the 'HIGH' region motif. Glutamate 630 lines the L-isoleucyl-5'-AMP pocket. The short motif at 671–675 (KMSKS) is the 'KMSKS' region element. Lysine 674 serves as a coordination point for ATP.

The protein belongs to the class-I aminoacyl-tRNA synthetase family. IleS type 1 subfamily. In terms of assembly, monomer.

It is found in the cytoplasm. The enzyme catalyses tRNA(Ile) + L-isoleucine + ATP = L-isoleucyl-tRNA(Ile) + AMP + diphosphate. Functionally, catalyzes the attachment of isoleucine to tRNA(Ile). As IleRS can inadvertently accommodate and process structurally similar amino acids such as valine, to avoid such errors it has two additional distinct tRNA(Ile)-dependent editing activities. One activity is designated as 'pretransfer' editing and involves the hydrolysis of activated Val-AMP. The other activity is designated 'posttransfer' editing and involves deacylation of mischarged Val-tRNA(Ile). The protein is Isoleucine--tRNA ligase of Bradyrhizobium diazoefficiens (strain JCM 10833 / BCRC 13528 / IAM 13628 / NBRC 14792 / USDA 110).